Consider the following 129-residue polypeptide: Glycine cleavage system H protein (129 aa).

Residues 24 to 106 (TYTVGITEHA…YTDGWIFKIR (83 aa)) form the Lipoyl-binding domain. N6-lipoyllysine is present on K65.

Belongs to the GcvH family. As to quaternary structure, the glycine cleavage system is composed of four proteins: P, T, L and H. It depends on (R)-lipoate as a cofactor.

The glycine cleavage system catalyzes the degradation of glycine. The H protein shuttles the methylamine group of glycine from the P protein to the T protein. This chain is Glycine cleavage system H protein, found in Enterobacter sp. (strain 638).